Reading from the N-terminus, the 403-residue chain is Alkaline protease 1 (403 aa).

A signal peptide spans 1–21 (MQSIKRTLLLLGAVLPAVLAG). Residues 22–121 (PIFPHRRAPT…VEEDQVWHLF (100 aa)) constitute a propeptide that is removed on maturation. An Inhibitor I9 domain is found at 36–120 (KYIVTFKSDV…AVEEDQVWHL (85 aa)). Residues 130–403 (PWGLGSISHK…PNLLAYNGNA (274 aa)) enclose the Peptidase S8 domain. Catalysis depends on charge relay system residues D162 and H193. 2 N-linked (GlcNAc...) asparagine glycosylation sites follow: N253 and N309. S349 functions as the Charge relay system in the catalytic mechanism.

It belongs to the peptidase S8 family.

The protein localises to the secreted. The enzyme catalyses Hydrolysis of proteins with broad specificity, and of Bz-Arg-OEt &gt; Ac-Tyr-OEt. Does not hydrolyze peptide amides.. Secreted alkaline protease that allows assimilation of proteinaceous substrates. This chain is Alkaline protease 1 (alp1), found in Aspergillus flavus.